Reading from the N-terminus, the 186-residue chain is uncharacterized protein (186 aa).

One can recognise a Cupin type-2 domain in the interval 89–164; the sequence is LMSLGIGEDI…NTPLKLYSIY (76 aa). Position 117–124 (117–124) interacts with ATP; sequence GIVKMGKS.

This is an uncharacterized protein from Bacillus subtilis (strain 168).